The following is a 288-amino-acid chain: Proteasome subunit beta (288 aa).

Residues 1 to 57 constitute a propeptide, removed in mature form; by autocatalysis; sequence MTVDGQVGRWPVSAIPAAYMRPGSGSFTEFLAGAEPHLLPGRAGAQPAGAAPAVPHG. T58 serves as the catalytic Nucleophile.

This sequence belongs to the peptidase T1B family. In terms of assembly, the 20S proteasome core is composed of 14 alpha and 14 beta subunits that assemble into four stacked heptameric rings, resulting in a barrel-shaped structure. The two inner rings, each composed of seven catalytic beta subunits, are sandwiched by two outer rings, each composed of seven alpha subunits. The catalytic chamber with the active sites is on the inside of the barrel. Has a gated structure, the ends of the cylinder being occluded by the N-termini of the alpha-subunits. Is capped by the proteasome-associated ATPase, ARC.

It is found in the cytoplasm. The enzyme catalyses Cleavage of peptide bonds with very broad specificity.. It functions in the pathway protein degradation; proteasomal Pup-dependent pathway. With respect to regulation, the formation of the proteasomal ATPase ARC-20S proteasome complex, likely via the docking of the C-termini of ARC into the intersubunit pockets in the alpha-rings, may trigger opening of the gate for substrate entry. Interconversion between the open-gate and close-gate conformations leads to a dynamic regulation of the 20S proteasome proteolysis activity. In terms of biological role, component of the proteasome core, a large protease complex with broad specificity involved in protein degradation. The polypeptide is Proteasome subunit beta (Nakamurella multipartita (strain ATCC 700099 / DSM 44233 / CIP 104796 / JCM 9543 / NBRC 105858 / Y-104) (Microsphaera multipartita)).